The following is a 270-amino-acid chain: tRNA pseudouridine synthase A (270 aa).

Asp51 serves as the catalytic Nucleophile. Tyr109 contributes to the substrate binding site.

It belongs to the tRNA pseudouridine synthase TruA family. Homodimer.

It catalyses the reaction uridine(38/39/40) in tRNA = pseudouridine(38/39/40) in tRNA. Its function is as follows. Formation of pseudouridine at positions 38, 39 and 40 in the anticodon stem and loop of transfer RNAs. This chain is tRNA pseudouridine synthase A, found in Burkholderia vietnamiensis (strain G4 / LMG 22486) (Burkholderia cepacia (strain R1808)).